A 307-amino-acid polypeptide reads, in one-letter code: Ubiquitin recognition factor in ER-associated degradation protein 1 (307 aa).

M1 bears the N-acetylmethionine mark. S129, S231, S245, S247, and S299 each carry phosphoserine. Disordered regions lie at residues 231-256 and 288-307; these read SGNRLDGKKKGVEPSPSPIKPGDIKR and GRFVAFSGEGQSLRKKGRKP.

The protein belongs to the UFD1 family. In terms of assembly, heterodimer with NPLOC4, this heterodimer binds VCP and inhibits Golgi membrane fusion. Interacts with USP13. Interacts with ZFAND2B; probably through VCP. Found in adult heart, skeletal muscle and pancreas, and in fetal liver and kidney.

It localises to the nucleus. The protein resides in the cytoplasm. Its subcellular location is the cytosol. It participates in protein degradation; proteasomal ubiquitin-dependent pathway. Functionally, essential component of the ubiquitin-dependent proteolytic pathway which degrades ubiquitin fusion proteins. The ternary complex containing UFD1, VCP and NPLOC4 binds ubiquitinated proteins and is necessary for the export of misfolded proteins from the ER to the cytoplasm, where they are degraded by the proteasome. The NPLOC4-UFD1-VCP complex regulates spindle disassembly at the end of mitosis and is necessary for the formation of a closed nuclear envelope. It may be involved in the development of some ectoderm-derived structures. Acts as a negative regulator of type I interferon production via the complex formed with VCP and NPLOC4, which binds to RIGI and recruits RNF125 to promote ubiquitination and degradation of RIGI. The sequence is that of Ubiquitin recognition factor in ER-associated degradation protein 1 from Homo sapiens (Human).